Reading from the N-terminus, the 265-residue chain is MAERSAPVGVMDSGVGGLSVLAEIQRLLPNETLLYVADCGHIPYGEKSPDYIRERCRHIAEFFHEQGAKAMVLACNTATVAAVADLRELYPTWPLVGMEPAVKPAAAATRSGVVGVLATTGTLQSAKFAALLDRFANDVQVITQPCPGLVELIETGDLASPALRQMLQGYVQPLLAAGCDTLILGCTHYPFLRPLLAGMVPNDVAIIDTGAAVARQLRRLLGANDLLAKGPAGAARFWTSADPEALRKILPVLWHKSDDVQSFAL.

Residues 12–13 and 44–45 each bind substrate; these read DS and YG. Cys75 (proton donor/acceptor) is an active-site residue. 76-77 lines the substrate pocket; sequence NT. Cys186 serves as the catalytic Proton donor/acceptor. A substrate-binding site is contributed by 187 to 188; it reads TH.

Belongs to the aspartate/glutamate racemases family.

It carries out the reaction L-glutamate = D-glutamate. It functions in the pathway cell wall biogenesis; peptidoglycan biosynthesis. Functionally, provides the (R)-glutamate required for cell wall biosynthesis. The protein is Glutamate racemase of Pseudomonas putida (strain ATCC 700007 / DSM 6899 / JCM 31910 / BCRC 17059 / LMG 24140 / F1).